The primary structure comprises 230 residues: MATKSKRTLAIRAMVDRNNRYAIEEALELVKKMATTKFDESVDVAVGLGIDPRKSDQVVRGAVVLPHGTGKQMRVAVFATADKATEAREAGADIVGMEDLAELVKAGQMDFDVVIATPDAMRVVGTLGPVLGPRGLMPNPKVGTVTADVRTAVINAKGGQVRYRADKGGIVHSTIGKSSFEVKALQENLLVLIDSLRKAKPATSKGIYIRKVNLSPTMGPGVAVDLSGLG.

The protein belongs to the universal ribosomal protein uL1 family. As to quaternary structure, part of the 50S ribosomal subunit.

Its function is as follows. Binds directly to 23S rRNA. The L1 stalk is quite mobile in the ribosome, and is involved in E site tRNA release. In terms of biological role, protein L1 is also a translational repressor protein, it controls the translation of the L11 operon by binding to its mRNA. The sequence is that of Large ribosomal subunit protein uL1 from Acidithiobacillus ferrooxidans (strain ATCC 53993 / BNL-5-31) (Leptospirillum ferrooxidans (ATCC 53993)).